The sequence spans 525 residues: Acyl-CoA-binding domain-containing protein 5 (525 aa).

In terms of domain architecture, ACB spans 43 to 132 (HETRFEAAVK…MKKIIETMPM (90 aa)). An acyl-CoA is bound by residues 54 to 63 (IQSLPKNGSF), 74 to 78 (YSFYK), Lys100, and Tyr119. Positions 157–216 (RSSDITSDLDNVLTSTPNAKTVNGKAESSDSGAESEEEEAQEEVKGAEQSDNDKKMMKKS) are disordered. The segment covering 158-177 (SSDITSDLDNVLTSTPNAKT) has biased composition (polar residues). The stretch at 181 to 210 (KAESSDSGAESEEEEAQEEVKGAEQSDNDK) forms a coiled coil. A phosphoserine mark is found at Ser184, Ser185, Ser187, Ser191, Ser206, Ser270, and Ser304. Residues 198–216 (EEVKGAEQSDNDKKMMKKS) are compositionally biased toward basic and acidic residues. Over residues 367–376 (EVKHGGEDGR) the composition is skewed to basic and acidic residues. Residues 367-433 (EVKHGGEDGR…ERWGSDRGSR (67 aa)) are disordered. Ser419 is subject to Phosphoserine. The span at 422-432 (DGERWGSDRGS) shows a compositional bias: basic and acidic residues. Residues 438 to 467 (EQIALVLMRLQEDMQNVLQRLQKLETLTAL) are a coiled coil. At Lys460 the chain carries N6-acetyllysine. A helical transmembrane segment spans residues 489–509 (WWPFEMSPGVLTFAIIWPFIA).

This sequence belongs to the ATG37 family.

Its subcellular location is the peroxisome membrane. Acyl-CoA binding protein which acts as the peroxisome receptor for pexophagy but is dispensable for aggrephagy and nonselective autophagy. Binds medium- and long-chain acyl-CoA esters. This chain is Acyl-CoA-binding domain-containing protein 5 (ACBD5), found in Pongo abelii (Sumatran orangutan).